A 593-amino-acid polypeptide reads, in one-letter code: Proline--tRNA ligase (593 aa).

The protein belongs to the class-II aminoacyl-tRNA synthetase family. ProS type 1 subfamily. In terms of assembly, homodimer.

The protein localises to the cytoplasm. The enzyme catalyses tRNA(Pro) + L-proline + ATP = L-prolyl-tRNA(Pro) + AMP + diphosphate. In terms of biological role, catalyzes the attachment of proline to tRNA(Pro) in a two-step reaction: proline is first activated by ATP to form Pro-AMP and then transferred to the acceptor end of tRNA(Pro). As ProRS can inadvertently accommodate and process non-cognate amino acids such as alanine and cysteine, to avoid such errors it has two additional distinct editing activities against alanine. One activity is designated as 'pretransfer' editing and involves the tRNA(Pro)-independent hydrolysis of activated Ala-AMP. The other activity is designated 'posttransfer' editing and involves deacylation of mischarged Ala-tRNA(Pro). The misacylated Cys-tRNA(Pro) is not edited by ProRS. In Parasynechococcus marenigrum (strain WH8102), this protein is Proline--tRNA ligase.